Here is a 209-residue protein sequence, read N- to C-terminus: Protein ASG7 (209 aa).

Over 1-49 (MTTLASSIEHKTKHLAAPFENDENPWMKKYCCQCKSCKMSVPVQPWLPR) the chain is Lumenal. Residues 50–70 (FFVFGILCPVFWLVNLLAWWF) traverse the membrane as a helical segment. The Cytoplasmic portion of the chain corresponds to 71 to 184 (LQYWQPHELE…LLRKTFRDWN (114 aa)). Serine 121, serine 123, and serine 125 each carry phosphoserine. Residue threonine 153 is modified to Phosphothreonine. The chain crosses the membrane as a helical span at residues 185-205 (LRSLLGLLIDSILIIFVVLLC). The Lumenal segment spans residues 206 to 209 (KKSR).

The protein localises to the endomembrane system. Required for receptor inhibition of inappropriately expressed a-factor receptor (STE3) in MAT a cells. Inhibits signaling by relocalizing the G protein beta-gamma (STE4-STE18) subunit to intracellular membranes. May also be a mechanism for the down-regulation of the mating pheromone response after the zygotic fusion event, promoting the transition of the new diploid cell to vegetative growth. This chain is Protein ASG7 (ASG7), found in Saccharomyces cerevisiae (strain ATCC 204508 / S288c) (Baker's yeast).